An 80-amino-acid polypeptide reads, in one-letter code: N-V protease (80 aa).

Belongs to the peptidase S8 family. As to quaternary structure, monomer. As to expression, body cavity.

It is found in the secreted. Its activity is regulated as follows. Inhibited by the serine protease inhibitors DFP, PMSF and TLCK. Not inhibited by the serine protease inhibitors aprotinin, elastinal, SBTI and benzamidine, the cysteine protease inhibitors iodoacetate and E64, or the metalloprotease inhibitors EDTA and EGTA. Serine protease. Hydrolyzes the alpha chains of fibrin and fibrinogen completely, has lower activity on the beta and gamma chains of fibrin and fibrinogen. The polypeptide is N-V protease (Alitta virens (Sandworm)).